A 265-amino-acid polypeptide reads, in one-letter code: Synaptoporin (265 aa).

The Cytoplasmic portion of the chain corresponds to 1–4 (MCMV). The MARVEL domain occupies 1–202 (MCMVIFAPLF…NIWFVFKETG (202 aa)). Residues 5 to 25 (IFAPLFAMFAFATCGGYSGGL) traverse the membrane as a helical segment. Residues 26 to 81 (RLSVDCVNKTESNLSIDIAFAYPFRLQQVTFEVPTCEGKEQQKLALVGDSSSSAEF) are Vesicular-facing. N-linked (GlcNAc...) asparagine glycosylation is found at Asn33 and Asn38. Residues 82–102 (FVTVAVFAFLYSLAATVVYIF) traverse the membrane as a helical segment. Topologically, residues 103-114 (FQNKYRENNRGP) are cytoplasmic. Residues 115–135 (LIDFIVTVVFSFLWLVGSSAW) traverse the membrane as a helical segment. The Vesicular segment spans residues 136-177 (AKGLSDVKVATDPKEVLLLMSACKQPSNKCMAVHSPVMSSLN). A helical membrane pass occupies residues 178–198 (TSVVFGFLNFILWAGNIWFVF). The Cytoplasmic portion of the chain corresponds to 199–265 (KETGWHSSGQ…SGPTSFNNQI (67 aa)). 5 consecutive repeat copies span residues 210-214 (YLSDP), 222-226 (YNQGR), 227-231 (YNQES), 232-236 (YGSSG), and 238-242 (YSQQA). The segment at 210–242 (YLSDPMEKHSSSYNQGRYNQESYGSSGGYSQQA) is 5 X approximate repeats. Ser212 carries the post-translational modification Phosphoserine. Polar residues predominate over residues 221–230 (SYNQGRYNQE). The disordered stretch occupies residues 221 to 265 (SYNQGRYNQESYGSSGGYSQQANLGPTSDEFGQQPSGPTSFNNQI). A compositionally biased stretch (polar residues) spans 240 to 265 (QQANLGPTSDEFGQQPSGPTSFNNQI).

It belongs to the synaptophysin/synaptobrevin family.

The protein localises to the cytoplasmic vesicle. Its subcellular location is the secretory vesicle. It localises to the synaptic vesicle membrane. It is found in the synapse. The protein resides in the synaptosome. Intrinsic membrane protein of small synaptic vesicles. Probable vesicular channel protein. This is Synaptoporin (Synpr) from Mus musculus (Mouse).